Reading from the N-terminus, the 230-residue chain is Transmembrane 4 L6 family member 20 (230 aa).

At 1–11 (MTCCEGWTSCN) the chain is on the lumenal side. Residues 12–32 (GFSLLVLLLLGVTLNAIPLIL) form a helical membrane-spanning segment. The Cytoplasmic segment spans residues 33 to 44 (NFVDEDQFFENP). The chain crosses the membrane as a helical span at residues 45 to 65 (ISCFEWWFPGIIGAGVMAIPA). Residues 66-83 (TTMSLAARKRACCNNKTG) are Lumenal-facing. Residues 84–104 (MFLSSLLNAITVIGAAYCLLV) form a helical membrane-spanning segment. At 105-185 (SIQALAEGPL…HFNSIENQHR (81 aa)) the chain is on the cytoplasmic side. A helical transmembrane segment spans residues 186–206 (IIHFSVFLGLLLVGILEILFG). At 207–230 (LSQIIIGFFGCLCGGVSNGRSQIV) the chain is on the lumenal side.

Belongs to the L6 tetraspanin family. In terms of processing, glycosylated at Asn-132 in presence of ceramide which inverts the orientation of TM4SF20 in membranes exposing these residues to the endoplasmic reticulum lumen. Post-translationally, cleaved by signal peptidase at Ser-14 but the peptide does not act as a signal peptide. Cleavage is inhibited by ceramide which inverts the orientation of TM4SF20 in membranes exposing the N-terminus to the cytosol and not to the endoplasmic reticulum lumen.

The protein localises to the membrane. It localises to the endoplasmic reticulum membrane. Functionally, polytopic transmembrane protein. Inhibits regulated intramembrane proteolysis (RIP) of CREB3L1, inhibiting its activation and the induction of collagen synthesis. In response to ceramide, which alters TM4SF20 membrane topology, stimulates RIP activation of CREB3L1. Ceramide reverses the direction through which transmembrane helices are translocated into the endoplasmic reticulum membrane during translation of TM4SF20, this mechanism is called 'regulated alternative translocation' (RAT) and regulates the function of the transmembrane protein. This Bos taurus (Bovine) protein is Transmembrane 4 L6 family member 20 (TM4SF20).